Here is a 362-residue protein sequence, read N- to C-terminus: Heat-inducible transcription repressor HrcA (362 aa).

It belongs to the HrcA family.

In terms of biological role, negative regulator of class I heat shock genes (grpE-dnaK-dnaJ and groELS operons). Prevents heat-shock induction of these operons. The polypeptide is Heat-inducible transcription repressor HrcA (Bradyrhizobium sp. (strain ORS 278)).